The primary structure comprises 462 residues: L-seryl-tRNA(Sec) selenium transferase (462 aa).

Lys-294 is modified (N6-(pyridoxal phosphate)lysine).

This sequence belongs to the SelA family. In terms of assembly, homodecamer; pentamer of dimers. Binds only one seryl-tRNA(Sec) per dimer. Pyridoxal 5'-phosphate serves as cofactor.

It localises to the cytoplasm. The catalysed reaction is L-seryl-tRNA(Sec) + selenophosphate + H(+) = L-selenocysteinyl-tRNA(Sec) + phosphate. Its pathway is aminoacyl-tRNA biosynthesis; selenocysteinyl-tRNA(Sec) biosynthesis; selenocysteinyl-tRNA(Sec) from L-seryl-tRNA(Sec) (bacterial route): step 1/1. Converts seryl-tRNA(Sec) to selenocysteinyl-tRNA(Sec) required for selenoprotein biosynthesis. In Yersinia pestis bv. Antiqua (strain Antiqua), this protein is L-seryl-tRNA(Sec) selenium transferase.